Here is a 109-residue protein sequence, read N- to C-terminus: Nucleoid-associated protein VC_1055 (109 aa).

Residues 1–22 (MFGKGGMGNLMKQAQQMQERMQ) form a disordered region.

Belongs to the YbaB/EbfC family. In terms of assembly, homodimer.

The protein resides in the cytoplasm. The protein localises to the nucleoid. Binds to DNA and alters its conformation. May be involved in regulation of gene expression, nucleoid organization and DNA protection. The chain is Nucleoid-associated protein VC_1055 from Vibrio cholerae serotype O1 (strain ATCC 39315 / El Tor Inaba N16961).